The chain runs to 263 residues: MGSGNLIKAIIRLKKSKQGTEKKKTSAVKPKKGSKKKGTSLVTRSEDWAATRIQTAFKAYKARKSLRRLKGIARAKLSTEKQSVKNQAVVTLRYLHSWSKIQSEIKARRVCMVTEWRLKNKRLEHQQKLEAKLHDVEVEWNGGSETKDEILERILQREEATIKRERALAYAFSHQWKADGKTQWLGSYELGNTNWGWSWKERWISARPWEVRYSVTPKKPKSSKTDSNSPAKRTVSLSSVPAKTPFPGARNTVKPRRLSFPGA.

The tract at residues Ser16–Leu41 is disordered. A Nuclear localization signal 1 motif is present at residues Glu21–Val28. Residues Thr25 to Gly38 show a composition bias toward basic residues. The region spanning Glu46 to Ala75 is the IQ domain. Positions Ala59–Ser78 are calmodulin-binding. Residues Ala107 to Thr114 carry the Nuclear localization signal 2 motif. The segment at Thr216 to Ala263 is disordered. Over residues Asp226–Pro241 the composition is skewed to polar residues.

The protein belongs to the IQD family. Binds to multiple calmodulin (CaM) in the presence of Ca(2+) and CaM-like proteins.

It localises to the nucleus. Its subcellular location is the nuclear body. May be involved in cooperative interactions with calmodulins or calmodulin-like proteins. Recruits calmodulin proteins to microtubules, thus being a potential scaffold in cellular signaling and trafficking. May associate with nucleic acids and regulate gene expression at the transcriptional or post-transcriptional level. In Arabidopsis thaliana (Mouse-ear cress), this protein is Protein IQ-DOMAIN 9.